Consider the following 245-residue polypeptide: Carboxy-S-adenosyl-L-methionine synthase (245 aa).

S-adenosyl-L-methionine-binding positions include tyrosine 42, 67–69, 92–93, 120–121, asparagine 135, and arginine 202; these read GCS, DN, and DI.

Belongs to the class I-like SAM-binding methyltransferase superfamily. Cx-SAM synthase family. Homodimer.

The enzyme catalyses prephenate + S-adenosyl-L-methionine = carboxy-S-adenosyl-L-methionine + 3-phenylpyruvate + H2O. In terms of biological role, catalyzes the conversion of S-adenosyl-L-methionine (SAM) to carboxy-S-adenosyl-L-methionine (Cx-SAM). The sequence is that of Carboxy-S-adenosyl-L-methionine synthase from Vibrio vulnificus (strain YJ016).